Reading from the N-terminus, the 327-residue chain is uncharacterized protein (327 aa).

The S4 RNA-binding domain maps to 12–79 (KRLDEFLAKE…LKKELDLEIE (68 aa)). The active site involves Asp136.

The protein belongs to the pseudouridine synthase RluA family.

The catalysed reaction is a uridine in RNA = a pseudouridine in RNA. This is an uncharacterized protein from Helicobacter pylori (strain ATCC 700392 / 26695) (Campylobacter pylori).